A 118-amino-acid chain; its full sequence is cAMP-responsive element-binding protein-like 2 (118 aa).

The tract at residues 1 to 25 is disordered; sequence MDDSKVSGGKVKKPGKRGRKPAKID. The span at 10–21 shows a compositional bias: basic residues; it reads KVKKPGKRGRKP. In terms of domain architecture, bZIP spans 23–86; the sequence is KIDLKAKLER…AAMDQGKIPS (64 aa). Residues 29 to 60 are basic motif; the sequence is KLERSRQSARECRARKKLRYQYLEELVSSRER. Positions 62–69 are leucine-zipper; it reads ICALREEL.

It belongs to the bZIP family. ATF subfamily.

The protein localises to the nucleus. Functionally, probable regulator of creb1 transcriptional activity which is involved in adipose cells differentiation. May also play a regulatory role in the cell cycle. This is cAMP-responsive element-binding protein-like 2 (crebl2) from Xenopus tropicalis (Western clawed frog).